We begin with the raw amino-acid sequence, 238 residues long: uncharacterized protein (238 aa).

The S4 RNA-binding domain occupies 1-64; that stretch reads MRLDKYLSKS…KPKKNVYLML (64 aa). Aspartate 103 acts as the Nucleophile in catalysis.

Belongs to the pseudouridine synthase RsuA family.

The catalysed reaction is a uridine in RNA = a pseudouridine in RNA. This is an uncharacterized protein from Aquifex aeolicus (strain VF5).